We begin with the raw amino-acid sequence, 177 residues long: Probasin (177 aa).

The N-terminal stretch at 1-17 (MRVILLLLTLDVLGVSS) is a signal peptide. Cys-79 and Cys-170 are disulfide-bonded.

It belongs to the calycin superfamily. Lipocalin family. In terms of tissue distribution, prostatic epithelial cells.

Its subcellular location is the nucleus. The protein localises to the secreted. The protein is Probasin (Pbsn) of Rattus norvegicus (Rat).